The sequence spans 899 residues: Protein translocase subunit SecA (899 aa).

Residues glutamine 87, 105-109, and aspartate 516 contribute to the ATP site; that span reads GEGKT. The Zn(2+) site is built by cysteine 884, cysteine 886, cysteine 895, and histidine 896.

It belongs to the SecA family. As to quaternary structure, monomer and homodimer. Part of the essential Sec protein translocation apparatus which comprises SecA, SecYEG and auxiliary proteins SecDF. Other proteins may also be involved. Zn(2+) serves as cofactor.

It localises to the cell inner membrane. The protein resides in the cytoplasm. The enzyme catalyses ATP + H2O + cellular proteinSide 1 = ADP + phosphate + cellular proteinSide 2.. Its function is as follows. Part of the Sec protein translocase complex. Interacts with the SecYEG preprotein conducting channel. Has a central role in coupling the hydrolysis of ATP to the transfer of proteins into and across the cell membrane, serving as an ATP-driven molecular motor driving the stepwise translocation of polypeptide chains across the membrane. This is Protein translocase subunit SecA from Borrelia garinii subsp. bavariensis (strain ATCC BAA-2496 / DSM 23469 / PBi) (Borreliella bavariensis).